A 1169-amino-acid chain; its full sequence is Transcription-repair-coupling factor (1169 aa).

In terms of domain architecture, Helicase ATP-binding spans Asp634 to Ile795. Gly647–Thr654 lines the ATP pocket. Residues Asp748 to Gln751 carry the DEEQ box motif. The Helicase C-terminal domain maps to Val809–Asn970.

This sequence in the N-terminal section; belongs to the UvrB family. The protein in the C-terminal section; belongs to the helicase family. RecG subfamily.

The protein localises to the cytoplasm. Couples transcription and DNA repair by recognizing RNA polymerase (RNAP) stalled at DNA lesions. Mediates ATP-dependent release of RNAP and its truncated transcript from the DNA, and recruitment of nucleotide excision repair machinery to the damaged site. In Staphylococcus epidermidis (strain ATCC 35984 / DSM 28319 / BCRC 17069 / CCUG 31568 / BM 3577 / RP62A), this protein is Transcription-repair-coupling factor.